Consider the following 286-residue polypeptide: Aquaporin NIP4-1 (286 aa).

Helical transmembrane passes span 59–79 (VMVEGLASFLVVFWSCVAALM) and 86–106 (LTFPMVCLVVAMTVAFVLSWL). The NPA 1 motif lies at 112–114 (NPA). 3 consecutive transmembrane segments (helical) span residues 133–153 (LYVAAQLAGSLLACLSVNAVM), 173–193 (LPFLMEFLASAVLMIVIATVA), and 201–221 (TVGGIAIGAAVGGLGLVIGPV). The NPA 2 signature appears at 227–229 (NPA). Residues 241–261 (YDGVWIYVVAPVAGMLVGALC) form a helical membrane-spanning segment.

It belongs to the MIP/aquaporin (TC 1.A.8) family. NIP (TC 1.A.8.12) subfamily. Expressed in leaves and at lower levels in roots.

The protein localises to the membrane. Its function is as follows. Aquaporins facilitate the transport of water and small neutral solutes across cell membranes. The polypeptide is Aquaporin NIP4-1 (NIP4-1) (Oryza sativa subsp. japonica (Rice)).